Consider the following 416-residue polypeptide: RNA polymerase sigma factor SigA (416 aa).

Residues 184–254 (MVQSNLRLVV…TRAIADQSRT (71 aa)) form a sigma-70 factor domain-2 region. Positions 208-211 (DLIQ) match the Interaction with polymerase core subunit RpoC motif. The segment at 263–338 (ETISRIKKTT…EADGETPEDE (76 aa)) is sigma-70 factor domain-3. The tract at residues 351-404 (VLDTLSPRERDVLRLRYGLDDGRMKTLEEIGQIFNVTRERIRQIEAKALRKLRH) is sigma-70 factor domain-4. The segment at residues 377–396 (LEEIGQIFNVTRERIRQIEA) is a DNA-binding region (H-T-H motif).

The protein belongs to the sigma-70 factor family. RpoD/SigA subfamily. As to quaternary structure, interacts transiently with the RNA polymerase catalytic core.

The protein resides in the cytoplasm. Its function is as follows. Sigma factors are initiation factors that promote the attachment of RNA polymerase to specific initiation sites and are then released. This sigma factor is the primary sigma factor during exponential growth. This chain is RNA polymerase sigma factor SigA, found in Microcystis aeruginosa.